The sequence spans 300 residues: ATP-dependent (S)-NAD(P)H-hydrate dehydratase (300 aa).

A YjeF C-terminal domain is found at 14 to 293; the sequence is LLALFKTVVP…NQIPSVFQTE (280 aa). (6S)-NADPHX is bound by residues glycine 114 and 167–173; that span reads NVMEFQR. ATP-binding positions include 198 to 202 and 219 to 228; these read KGAND and GSGRRCGGQG. Aspartate 229 contributes to the (6S)-NADPHX binding site.

Belongs to the NnrD/CARKD family. Mg(2+) serves as cofactor.

The catalysed reaction is (6S)-NADHX + ATP = ADP + phosphate + NADH + H(+). It catalyses the reaction (6S)-NADPHX + ATP = ADP + phosphate + NADPH + H(+). Its function is as follows. Catalyzes the dehydration of the S-form of NAD(P)HX at the expense of ATP, which is converted to ADP. Together with NAD(P)HX epimerase, which catalyzes the epimerization of the S- and R-forms, the enzyme allows the repair of both epimers of NAD(P)HX, a damaged form of NAD(P)H that is a result of enzymatic or heat-dependent hydration. The sequence is that of ATP-dependent (S)-NAD(P)H-hydrate dehydratase from Drosophila melanogaster (Fruit fly).